The sequence spans 122 residues: MGRLFLCLVVAWCWVALLLVAPVHGRVGLPGEFSGDQRPVPATSFDLVTEPKTKQPRGVKGTRRPSWSSWSSTASRSSPPPGRGAPSAAAAAELRSVPAGPDPMHHHGSPRRPEHARSTGRP.

The first 25 residues, 1-25, serve as a signal peptide directing secretion; the sequence is MGRLFLCLVVAWCWVALLLVAPVHG. The interval 28-122 is disordered; the sequence is GLPGEFSGDQ…PEHARSTGRP (95 aa). The span at 54–63 shows a compositional bias: basic residues; that stretch reads KQPRGVKGTR. Low complexity predominate over residues 64–77; that stretch reads RPSWSSWSSTASRS. A compositionally biased stretch (basic and acidic residues) spans 111–122; the sequence is RRPEHARSTGRP.

The protein belongs to the CLV3/ESR signal peptide family.

The protein localises to the secreted. In terms of biological role, probable extracellular signal that regulates meristem maintenance. May function as a putative ligand for a receptor complex including FON1. Regulates the size of the floral meristem and the number of floral organs. The sequence is that of Protein FLORAL ORGAN NUMBER2 (FON2) from Oryza sativa subsp. indica (Rice).